The sequence spans 149 residues: D-aminoacyl-tRNA deacylase (149 aa).

The Gly-cisPro motif, important for rejection of L-amino acids signature appears at 138-139 (GP).

This sequence belongs to the DTD family. As to quaternary structure, homodimer.

It localises to the cytoplasm. It carries out the reaction glycyl-tRNA(Ala) + H2O = tRNA(Ala) + glycine + H(+). The enzyme catalyses a D-aminoacyl-tRNA + H2O = a tRNA + a D-alpha-amino acid + H(+). An aminoacyl-tRNA editing enzyme that deacylates mischarged D-aminoacyl-tRNAs. Also deacylates mischarged glycyl-tRNA(Ala), protecting cells against glycine mischarging by AlaRS. Acts via tRNA-based rather than protein-based catalysis; rejects L-amino acids rather than detecting D-amino acids in the active site. By recycling D-aminoacyl-tRNA to D-amino acids and free tRNA molecules, this enzyme counteracts the toxicity associated with the formation of D-aminoacyl-tRNA entities in vivo and helps enforce protein L-homochirality. The sequence is that of D-aminoacyl-tRNA deacylase from Chlorobaculum parvum (strain DSM 263 / NCIMB 8327) (Chlorobium vibrioforme subsp. thiosulfatophilum).